Consider the following 195-residue polypeptide: Calcineurin B homologous protein 1 (195 aa).

A lipid anchor (N-myristoyl glycine) is attached at Gly2. EF-hand domains are found at residues 26-61, 66-101, 110-145, and 151-186; these read SQITRLYSRFTSLDKGENGTLSREDFQRIPELAINP, IINAFFSEGEDQVNFRGFMRTLAHFRPIEDNEKSKD, SRSNKLHFAFRLYDLDKDDKISRDELLQVLRMMVGV, and QLGSIADRTIQEADQDGDCAISFAEFVKVLEKVDVE. Ca(2+)-binding residues include Asp123, Asp125, Asp127, Lys129, Glu134, Asp164, Asp166, Asp168, and Glu175.

The protein belongs to the calcineurin regulatory subunit family. CHP subfamily. As to quaternary structure, monomer. Post-translationally, phosphorylated. Calcium-binding or N-myristoylation are necessary for the Na(+)/H(+) exchange activities.

It localises to the nucleus. It is found in the cytoplasm. The protein resides in the cytoskeleton. Its subcellular location is the endomembrane system. The protein localises to the endoplasmic reticulum-Golgi intermediate compartment. It localises to the endoplasmic reticulum. It is found in the cell membrane. The protein resides in the membrane. Functionally, calcium-binding protein involved in different processes such as regulation of vesicular trafficking, plasma membrane Na(+)/H(+) exchanger and gene transcription. Involved in the constitutive exocytic membrane traffic. Mediates the association between microtubules and membrane-bound organelles of the endoplasmic reticulum and Golgi apparatus and is also required for the targeting and fusion of transcytotic vesicles (TCV) with the plasma membrane. Functions as an integral cofactor in cell pH regulation by controlling plasma membrane-type Na(+)/H(+) exchange activity. Inhibits serum- and GTPase-stimulated Na(+)/H(+) exchange. Plays a role as an inhibitor of ribosomal RNA transcription. Acts as a negative regulator of the calcineurin/NFAT signaling pathway. This chain is Calcineurin B homologous protein 1 (CHP1), found in Gallus gallus (Chicken).